The primary structure comprises 487 residues: Phosphoglucosamine mutase (487 aa).

The active-site Phosphoserine intermediate is the Ser-134. Mg(2+)-binding residues include Ser-134, Asp-277, Asp-279, and Asp-281. Ser-134 bears the Phosphoserine mark.

Belongs to the phosphohexose mutase family. Requires Mg(2+) as cofactor. In terms of processing, activated by phosphorylation.

The enzyme catalyses alpha-D-glucosamine 1-phosphate = D-glucosamine 6-phosphate. Functionally, catalyzes the conversion of glucosamine-6-phosphate to glucosamine-1-phosphate. The polypeptide is Phosphoglucosamine mutase (Gloeothece citriformis (strain PCC 7424) (Cyanothece sp. (strain PCC 7424))).